We begin with the raw amino-acid sequence, 1293 residues long: Putative DNA-directed RNA polymerase 008R (1293 aa).

The Zn(2+) site is built by C61, C64, C71, H74, C99, C102, and C123. The DNA-binding element occupies 270-339 (TNRKPMAGIK…PVMVTPFNVS (70 aa)). Residues 354–376 (EMRDGTVHRPSEWRPSHGDHMET) are compositionally biased toward basic and acidic residues. The tract at residues 354–390 (EMRDGTVHRPSEWRPSHGDHMETADGSPLGRVTRPSY) is disordered. 3 residues coordinate Mg(2+): D474, D476, and D478. The interval 724-734 (GQQYVGGSRPG) is alpha-amanitin binding. The tract at residues 776 to 788 (PREVFFHAKSGRE) is bridging helix.

It belongs to the RNA polymerase beta' chain family.

It catalyses the reaction RNA(n) + a ribonucleoside 5'-triphosphate = RNA(n+1) + diphosphate. Its function is as follows. Component of the DNA-dependent RNA polymerase that catalyzes the transcription of DNA into RNA using the four ribonucleoside triphosphates as substrates. Largest and catalytic component of RNA polymerase II which synthesizes mRNA precursors and many functional non-coding RNAs. Forms the polymerase active center together with the second largest subunit. The protein is Putative DNA-directed RNA polymerase 008R of Frog virus 3 (isolate Goorha) (FV-3).